The chain runs to 337 residues: 4-hydroxy-2-oxovalerate aldolase (337 aa).

Residues 6–256 (IRIMDTTLRD…ETGIDLFQIM (251 aa)) enclose the Pyruvate carboxyltransferase domain. Residue 14 to 15 (RD) coordinates substrate. Residue Asp15 participates in Mn(2+) binding. Residue His18 is the Proton acceptor of the active site. Ser168 and His195 together coordinate substrate. Positions 195 and 197 each coordinate Mn(2+). Tyr286 is a substrate binding site.

The protein belongs to the 4-hydroxy-2-oxovalerate aldolase family.

The enzyme catalyses (S)-4-hydroxy-2-oxopentanoate = acetaldehyde + pyruvate. The protein is 4-hydroxy-2-oxovalerate aldolase (nahM) of Geobacillus genomosp. 3.